Here is a 385-residue protein sequence, read N- to C-terminus: Spindle pole component BBP1 (385 aa).

Position 29 is a phosphoserine (Ser29). The segment covering 34 to 48 (YKDQEERRDRSRYAQ) has biased composition (basic and acidic residues). Residues 34–76 (YKDQEERRDRSRYAQDDTNFSMKFGNDSNRRSTNLSRSNSWSG) are disordered. Residues 64–75 (RSTNLSRSNSWS) show a composition bias toward low complexity. Phosphoserine occurs at positions 73 and 115. A coiled-coil region spans residues 229–355 (QMDLNSRDLE…KDMQRDNYES (127 aa)).

This sequence belongs to the BBP1 family. As to quaternary structure, homodimer. Interacts with KAR1, MPS2 and SPC29.

Its subcellular location is the cytoplasm. The protein localises to the cytoskeleton. The protein resides in the microtubule organizing center. It localises to the spindle pole body. Functionally, component of the spindle pole body (SPB) required for insertion of the nascent SPB into the nuclear envelope and for the proper execution of spindle pole body (SPB) duplication. Connects the central plaque of the SPB with the half-bridge. Required for proper localization of CDC5 at the SPB and for proper M-phase progression. The sequence is that of Spindle pole component BBP1 (BBP1) from Saccharomyces cerevisiae (strain ATCC 204508 / S288c) (Baker's yeast).